The primary structure comprises 324 residues: DNA repair and recombination protein RadA (324 aa).

Position 114–121 (114–121) interacts with ATP; it reads GEFGSGKT.

It belongs to the eukaryotic RecA-like protein family.

In terms of biological role, involved in DNA repair and in homologous recombination. Binds and assemble on single-stranded DNA to form a nucleoprotein filament. Hydrolyzes ATP in a ssDNA-dependent manner and promotes DNA strand exchange between homologous DNA molecules. In Metallosphaera sedula (strain ATCC 51363 / DSM 5348 / JCM 9185 / NBRC 15509 / TH2), this protein is DNA repair and recombination protein RadA.